The following is a 352-amino-acid chain: Zinc transporter 1 (352 aa).

Positions 1-29 (MARTMTMRVSSLLVAVVLLAALSFQACSG) are cleaved as a signal peptide. The Extracellular portion of the chain corresponds to 30–56 (HGGINDGDGQVDAPATPASSSGVRSKG). A helical transmembrane segment spans residues 57–77 (LIAVKVWCLVILLVFTFAGGV). Topologically, residues 78–87 (SPYFYRWNES) are cytoplasmic. The chain crosses the membrane as a helical span at residues 88–108 (FLLLGTQFAAGVFLGTALMHF). Residues 109–127 (LADSTSTFKGLTTNQYPFS) lie on the Extracellular side of the membrane. The chain crosses the membrane as a helical span at residues 128–148 (FMLTCVGFLLTMLSDLVIAAV). The Cytoplasmic portion of the chain corresponds to 149–200 (ARRSAAAGVSDNQVSEQQQRQQAEGAVMSRKEEEAAAVAHPAMLVRTSSFED). A helical transmembrane segment spans residues 201-221 (AVLLIVALCFHSVFEGIAIGV). Topologically, residues 222 to 230 (SASKSEAWR) are extracellular. A helical membrane pass occupies residues 231–251 (NLWTIGLHKIFAAVAMGIALL). Topologically, residues 252-262 (RMIPKRPFLMT) are cytoplasmic. The chain crosses the membrane as a helical span at residues 263 to 283 (VVYSLAFAVSSPVGVGIGIAI). The Extracellular portion of the chain corresponds to 284–296 (DATSQGRAADWTY). A helical membrane pass occupies residues 297 to 317 (AISMGLATGVFIYVAINHLIA). Residues 318–330 (KGYRPHHPTAADK) lie on the Cytoplasmic side of the membrane. A helical membrane pass occupies residues 331-351 (PLFKFLAVLLGVAVMAVVMIW). Position 352 (Asp-352) is a topological domain, extracellular.

It belongs to the ZIP transporter (TC 2.A.5) family. In terms of tissue distribution, expressed in vascular bundles of roots and leaves.

It localises to the cell membrane. Its function is as follows. Zinc transporter that may mediate zinc uptake from the rhizosphere. May also transport other divalent cations. The chain is Zinc transporter 1 (ZIP1) from Oryza sativa subsp. japonica (Rice).